Here is a 1235-residue protein sequence, read N- to C-terminus: ATP-dependent helicase/nuclease subunit A (1235 aa).

In terms of domain architecture, UvrD-like helicase ATP-binding spans 12–482 (SLWTDDQWKA…IDLSQNFRSR (471 aa)). Position 33–40 (33–40 (AAAGSGKT)) interacts with ATP. The UvrD-like helicase C-terminal domain maps to 509 to 800 (AAELTLGASF…RMMTIHASKG (292 aa)).

This sequence belongs to the helicase family. AddA subfamily. Heterodimer of AddA and AddB/RexB. Mg(2+) is required as a cofactor.

The enzyme catalyses Couples ATP hydrolysis with the unwinding of duplex DNA by translocating in the 3'-5' direction.. The catalysed reaction is ATP + H2O = ADP + phosphate + H(+). Its function is as follows. The heterodimer acts as both an ATP-dependent DNA helicase and an ATP-dependent, dual-direction single-stranded exonuclease. Recognizes the chi site generating a DNA molecule suitable for the initiation of homologous recombination. The AddA nuclease domain is required for chi fragment generation; this subunit has the helicase and 3' -&gt; 5' nuclease activities. The sequence is that of ATP-dependent helicase/nuclease subunit A from Listeria monocytogenes serotype 4b (strain F2365).